The sequence spans 699 residues: Polyribonucleotide nucleotidyltransferase (699 aa).

Mg(2+) is bound by residues Asp-484 and Asp-490. The 60-residue stretch at 551–610 (PRITTIQVKPDQVRTVIGPGGKNVRGIIEATGCAIDIEDDGRINIASADGDACKAAIKMI) folds into the KH domain. The region spanning 620-688 (GKLYMATVKK…RQGKIKLSRK (69 aa)) is the S1 motif domain.

It belongs to the polyribonucleotide nucleotidyltransferase family. The cofactor is Mg(2+).

The protein resides in the cytoplasm. The enzyme catalyses RNA(n+1) + phosphate = RNA(n) + a ribonucleoside 5'-diphosphate. In terms of biological role, involved in mRNA degradation. Catalyzes the phosphorolysis of single-stranded polyribonucleotides processively in the 3'- to 5'-direction. The polypeptide is Polyribonucleotide nucleotidyltransferase (Syntrophotalea carbinolica (strain DSM 2380 / NBRC 103641 / GraBd1) (Pelobacter carbinolicus)).